Here is a 232-residue protein sequence, read N- to C-terminus: Peptide deformylase (232 aa).

Residues C135 and H178 each contribute to the Fe cation site. Residue E179 is part of the active site. H182 contacts Fe cation.

This sequence belongs to the polypeptide deformylase family. It depends on Fe(2+) as a cofactor.

The enzyme catalyses N-terminal N-formyl-L-methionyl-[peptide] + H2O = N-terminal L-methionyl-[peptide] + formate. Its function is as follows. Removes the formyl group from the N-terminal Met of newly synthesized proteins. Requires at least a dipeptide for an efficient rate of reaction. N-terminal L-methionine is a prerequisite for activity but the enzyme has broad specificity at other positions. The polypeptide is Peptide deformylase (Deinococcus radiodurans (strain ATCC 13939 / DSM 20539 / JCM 16871 / CCUG 27074 / LMG 4051 / NBRC 15346 / NCIMB 9279 / VKM B-1422 / R1)).